Reading from the N-terminus, the 249-residue chain is MFGLKAKSTKKVLGSIPKHIGIIMDGNGRWAKKRLKPRVFGHKAGMDALQEVTITASELGVKVLTVYAFSTENWSRPQDEVSFIMNLPVTFFDKYVPVLHENNVKIQMIGETSRLPEDTLAALNAAIDKTKRNTGLILNFALNYGGRAEITSAVRFIAQDVLDAKLNPGDITEDLIANYLMTDHLPYLYRDPDLIIRTSGELRLSNFLPWQSAYSEFYFTPVLWPDFKKAELLKAIADYNRRQRRFGKV.

Residue D25 is part of the active site. D25 is a binding site for Mg(2+). Substrate-binding positions include 26-29 (GNGR), W30, R38, H42, and 70-72 (STE). N73 functions as the Proton acceptor in the catalytic mechanism. Residues W74, R76, R197, and 203–205 (RLS) each bind substrate. E216 is a binding site for Mg(2+).

The protein belongs to the UPP synthase family. As to quaternary structure, homodimer. It depends on Mg(2+) as a cofactor.

Catalyzes the condensation of isopentenyl diphosphate (IPP) with allylic pyrophosphates generating different type of terpenoids. The protein is Isoprenyl transferase of Streptococcus pyogenes serotype M1.